A 259-amino-acid chain; its full sequence is 7-cyano-7-deazaguanine synthase (259 aa).

32–42 (LSGGLDSVTCL) provides a ligand contact to ATP. Zn(2+) contacts are provided by C223, C233, C236, and C239.

It belongs to the QueC family. Requires Zn(2+) as cofactor.

It carries out the reaction 7-carboxy-7-deazaguanine + NH4(+) + ATP = 7-cyano-7-deazaguanine + ADP + phosphate + H2O + H(+). It functions in the pathway purine metabolism; 7-cyano-7-deazaguanine biosynthesis. Its function is as follows. Catalyzes the ATP-dependent conversion of 7-carboxy-7-deazaguanine (CDG) to 7-cyano-7-deazaguanine (preQ(0)). The polypeptide is 7-cyano-7-deazaguanine synthase (Psychrobacter arcticus (strain DSM 17307 / VKM B-2377 / 273-4)).